A 61-amino-acid chain; its full sequence is MDPNCSCATGGSCTCANSCTCKACKCASCKKSCCSCCPVGCAKCAQGCICKGASDKCSCCA.

At Met1 the chain carries N-acetylmethionine. Residues 1-29 (MDPNCSCATGGSCTCANSCTCKACKCASC) form a beta region. Cys5, Cys7, Cys13, Cys15, Cys19, Cys21, Cys24, Cys26, Cys29, Cys33, Cys34, Cys36, Cys37, Cys41, Cys44, Cys48, Cys50, Cys57, Cys59, and Cys60 together coordinate a divalent metal cation. Residues 30–61 (KKSCCSCCPVGCAKCAQGCICKGASDKCSCCA) form an alpha region.

This sequence belongs to the metallothionein superfamily. Type 1 family.

Functionally, metallothioneins have a high content of cysteine residues that bind various heavy metals; these proteins are transcriptionally regulated by both heavy metals and glucocorticoids. This isoform may play a role in regulating the transport, accumulation, and compartmentation of zinc in the hippocampus. In Bos taurus (Bovine), this protein is Metallothionein-II, hippocampal.